The following is an 878-amino-acid chain: Phosphoenolpyruvate carboxylase (878 aa).

Residues H137 and K545 contribute to the active site.

Belongs to the PEPCase type 1 family. Mg(2+) serves as cofactor.

It carries out the reaction oxaloacetate + phosphate = phosphoenolpyruvate + hydrogencarbonate. Functionally, forms oxaloacetate, a four-carbon dicarboxylic acid source for the tricarboxylic acid cycle. This chain is Phosphoenolpyruvate carboxylase, found in Serratia proteamaculans (strain 568).